The following is a 292-amino-acid chain: Acetylglutamate kinase (292 aa).

Residues Gly-64 to Gly-65, Arg-86, and Asn-190 each bind substrate.

Belongs to the acetylglutamate kinase family. ArgB subfamily.

It is found in the cytoplasm. The enzyme catalyses N-acetyl-L-glutamate + ATP = N-acetyl-L-glutamyl 5-phosphate + ADP. It participates in amino-acid biosynthesis; L-arginine biosynthesis; N(2)-acetyl-L-ornithine from L-glutamate: step 2/4. Functionally, catalyzes the ATP-dependent phosphorylation of N-acetyl-L-glutamate. The sequence is that of Acetylglutamate kinase from Geobacter sulfurreducens (strain ATCC 51573 / DSM 12127 / PCA).